A 389-amino-acid polypeptide reads, in one-letter code: MAMVVSAWRDPQEELAAVDDQSAAGREHLQHRHSPKSAEEKAQIAAQNQQHVECVVCGDKSSGKHYGQFTCEGCKSFFKRSVRRNLSYTCRANRNCPVDQHHRNQCQYCRLKKCLKVGMRREAVQRGRMPPNQPNPSHYALTNGDHLNGQCYLSGYISLLLRAEPYPASRYGNQCMQSGNIMGIENICELAARLLFSAVEWARNIPFFPDLQITDQVSLLRLTWSELFVLNAAQSSMPLHVAPLLAAAGLHASPMSADRVVAFMDHIRFFQEQVEKLKALQVDSAEYSCAKAIVLFTSDACGLSDIPHIEGLQEKSQCALEEYVRSQYPNQPTRFGKLLLRLPALRMVSSSVIEQLFFVRLVGKTPIETLIRDMLLSGSSFNWPYMPIQ.

Positions Asp-19–Glu-39 are disordered. Positions His-51–Arg-126 form a DNA-binding region, nuclear receptor. NR C4-type zinc fingers lie at residues Cys-54–Cys-74 and Cys-90–Cys-109. An NR LBD domain is found at Tyr-152–Gly-378.

Belongs to the nuclear hormone receptor family. NR2 subfamily. Expressed the retina, where expression is restricted to the outer nuclear layer.

It is found in the nucleus. Putative transcription factor that is required in photoreceptor cells precursors during eye development. This is Nuclear receptor subfamily 2 group F member 1-B from Danio rerio (Zebrafish).